The following is a 399-amino-acid chain: Glycerol-1-phosphate dehydrogenase [NAD(P)+] (399 aa).

Residues Asp56, 118–122 (GTIHD), and 140–143 (TAPS) contribute to the NAD(+) site. Asp145 provides a ligand contact to substrate. Ser149 serves as a coordination point for NAD(+). Position 192 (Asp192) interacts with substrate. Asp192 and His272 together coordinate Ni(2+). His276 contributes to the substrate binding site. Position 292 (His292) interacts with Ni(2+).

It belongs to the glycerol-1-phosphate dehydrogenase family. In terms of assembly, homodimer. Requires Ni(2+) as cofactor.

The protein resides in the cytoplasm. The enzyme catalyses sn-glycerol 1-phosphate + NAD(+) = dihydroxyacetone phosphate + NADH + H(+). The catalysed reaction is sn-glycerol 1-phosphate + NADP(+) = dihydroxyacetone phosphate + NADPH + H(+). In terms of biological role, catalyzes the NAD(P)H-dependent reduction of dihydroxyacetonephosphate (DHAP or glycerone phosphate) to glycerol 1-phosphate (G1P). The G1P thus generated is probably used for the synthesis of phosphoglycerolipids in Gram-positive bacterial species. This is Glycerol-1-phosphate dehydrogenase [NAD(P)+] from Halalkalibacterium halodurans (strain ATCC BAA-125 / DSM 18197 / FERM 7344 / JCM 9153 / C-125) (Bacillus halodurans).